A 143-amino-acid polypeptide reads, in one-letter code: Transcriptional regulator MraZ (143 aa).

SpoVT-AbrB domains follow at residues 5–47 and 76–119; these read EYQH…PMSE and ATEC…SKEI.

It belongs to the MraZ family. As to quaternary structure, forms oligomers.

The protein localises to the cytoplasm. Its subcellular location is the nucleoid. In Bacillus licheniformis (strain ATCC 14580 / DSM 13 / JCM 2505 / CCUG 7422 / NBRC 12200 / NCIMB 9375 / NCTC 10341 / NRRL NRS-1264 / Gibson 46), this protein is Transcriptional regulator MraZ.